The sequence spans 249 residues: Chitooligosaccharide deacetylase (249 aa).

Mg(2+) contacts are provided by His-61 and His-125.

This sequence belongs to the YdjC deacetylase family. ChbG subfamily. Homodimer. Requires Mg(2+) as cofactor.

It is found in the cytoplasm. It carries out the reaction N,N'-diacetylchitobiose + H2O = N-acetyl-beta-D-glucosaminyl-(1-&gt;4)-D-glucosamine + acetate. The catalysed reaction is diacetylchitobiose-6'-phosphate + H2O = N'-monoacetylchitobiose-6'-phosphate + acetate. The protein operates within glycan degradation; chitin degradation. In terms of biological role, involved in the degradation of chitin. ChbG is essential for growth on the acetylated chitooligosaccharides chitobiose and chitotriose but is dispensable for growth on cellobiose and chitosan dimer, the deacetylated form of chitobiose. Deacetylation of chitobiose-6-P and chitotriose-6-P is necessary for both the activation of the chb promoter by the regulatory protein ChbR and the hydrolysis of phosphorylated beta-glucosides by the phospho-beta-glucosidase ChbF. Catalyzes the removal of only one acetyl group from chitobiose-6-P to yield monoacetylchitobiose-6-P, the inducer of ChbR and the substrate of ChbF. The sequence is that of Chitooligosaccharide deacetylase from Escherichia coli (strain K12 / MC4100 / BW2952).